Reading from the N-terminus, the 121-residue chain is NADH-ubiquinone oxidoreductase chain 3 (121 aa).

3 helical membrane passes run 11–31 (ILIFFAISSLLSSVIFLLSYF), 63–83 (FYLVAILFLIFDLEISFLFPW), and 90–110 (ISIIGFWSMIVFLVILTIGFI).

The protein belongs to the complex I subunit 3 family.

It is found in the mitochondrion membrane. The catalysed reaction is a ubiquinone + NADH + 5 H(+)(in) = a ubiquinol + NAD(+) + 4 H(+)(out). Its function is as follows. Core subunit of the mitochondrial membrane respiratory chain NADH dehydrogenase (Complex I) that is believed to belong to the minimal assembly required for catalysis. Complex I functions in the transfer of electrons from NADH to the respiratory chain. The immediate electron acceptor for the enzyme is believed to be ubiquinone. This Chondrus crispus (Carrageen Irish moss) protein is NADH-ubiquinone oxidoreductase chain 3 (ND3).